The following is a 197-amino-acid chain: Imidazoleglycerol-phosphate dehydratase (197 aa).

This sequence belongs to the imidazoleglycerol-phosphate dehydratase family.

Its subcellular location is the cytoplasm. The catalysed reaction is D-erythro-1-(imidazol-4-yl)glycerol 3-phosphate = 3-(imidazol-4-yl)-2-oxopropyl phosphate + H2O. It participates in amino-acid biosynthesis; L-histidine biosynthesis; L-histidine from 5-phospho-alpha-D-ribose 1-diphosphate: step 6/9. This Streptomyces coelicolor (strain ATCC BAA-471 / A3(2) / M145) protein is Imidazoleglycerol-phosphate dehydratase (hisB).